The sequence spans 282 residues: MPVSRFAVFGHPIAHSLSPRIHTEFGRQMGVVLDYLAFDVAPDAFRVSLEHFVAEGGCGANVTLPLKEAAFEVCTTLSARARRAGAVNTLSRVDGVWHGENTDGTGLVRNLTERHGLDLRGRRALLLGAGGAARGVAPALLDAGITEMVIVNRSPERADMLCDALGEPGKVSARYWGDLGDLGNFELIINATSIGNTSDMRTFSLPRSLLDSMTAAVDLNYGSAAVPFLAWAHAVETRYAIDGLGMLVEQAAESFSLWHGRRPDTDPVYTVLHSEYGVPGRS.

Residues S16–S18 and T63 each bind shikimate. K67 acts as the Proton acceptor in catalysis. 2 residues coordinate shikimate: N88 and D103. Residues G128 to A132 and G243 each bind NADP(+).

It belongs to the shikimate dehydrogenase family. Homodimer.

It catalyses the reaction shikimate + NADP(+) = 3-dehydroshikimate + NADPH + H(+). The protein operates within metabolic intermediate biosynthesis; chorismate biosynthesis; chorismate from D-erythrose 4-phosphate and phosphoenolpyruvate: step 4/7. Functionally, involved in the biosynthesis of the chorismate, which leads to the biosynthesis of aromatic amino acids. Catalyzes the reversible NADPH linked reduction of 3-dehydroshikimate (DHSA) to yield shikimate (SA). This chain is Shikimate dehydrogenase (NADP(+)), found in Xylella fastidiosa (strain Temecula1 / ATCC 700964).